The primary structure comprises 416 residues: Serine hydroxymethyltransferase (416 aa).

(6S)-5,6,7,8-tetrahydrofolate-binding positions include Leu-121 and 125 to 127; that span reads GHL. Lys-230 is modified (N6-(pyridoxal phosphate)lysine). 354–356 contacts (6S)-5,6,7,8-tetrahydrofolate; sequence SPF.

It belongs to the SHMT family. In terms of assembly, homodimer. The cofactor is pyridoxal 5'-phosphate.

It localises to the cytoplasm. It carries out the reaction (6R)-5,10-methylene-5,6,7,8-tetrahydrofolate + glycine + H2O = (6S)-5,6,7,8-tetrahydrofolate + L-serine. Its pathway is one-carbon metabolism; tetrahydrofolate interconversion. The protein operates within amino-acid biosynthesis; glycine biosynthesis; glycine from L-serine: step 1/1. Its function is as follows. Catalyzes the reversible interconversion of serine and glycine with tetrahydrofolate (THF) serving as the one-carbon carrier. This reaction serves as the major source of one-carbon groups required for the biosynthesis of purines, thymidylate, methionine, and other important biomolecules. Also exhibits THF-independent aldolase activity toward beta-hydroxyamino acids, producing glycine and aldehydes, via a retro-aldol mechanism. This is Serine hydroxymethyltransferase from Prochlorococcus marinus (strain MIT 9211).